The chain runs to 289 residues: Phosphate import ATP-binding protein PstB (289 aa).

The disordered stretch occupies residues 1–37 (MRSIDRPGGQAARPTIGSVAGASNTRTRDARSLPDTP). The 244-residue stretch at 41–284 (AAAENFSFYY…PVRRETEDYI (244 aa)) folds into the ABC transporter domain. An ATP-binding site is contributed by 73–80 (GPSGCGKS).

The protein belongs to the ABC transporter superfamily. Phosphate importer (TC 3.A.1.7) family. As to quaternary structure, the complex is composed of two ATP-binding proteins (PstB), two transmembrane proteins (PstC and PstA) and a solute-binding protein (PstS).

The protein localises to the cell inner membrane. The enzyme catalyses phosphate(out) + ATP + H2O = ADP + 2 phosphate(in) + H(+). Part of the ABC transporter complex PstSACB involved in phosphate import. Responsible for energy coupling to the transport system. This chain is Phosphate import ATP-binding protein PstB, found in Aromatoleum aromaticum (strain DSM 19018 / LMG 30748 / EbN1) (Azoarcus sp. (strain EbN1)).